Here is a 375-residue protein sequence, read N- to C-terminus: AA9 family lytic polysaccharide monooxygenase CEL1 (375 aa).

The signal sequence occupies residues 1–16; it reads MLFPALALLCPVLVAA. Residue H119 coordinates Cu(2+). A disulfide bridge links C130 with C135. N132 is a glycosylation site (N-linked (GlcNAc...) asparagine). H196 lines the O2 pocket. N197 is a glycosylation site (N-linked (GlcNAc...) asparagine). Y212 lines the Cu(2+) pocket. The cysteines at positions 232 and 237 are disulfide-linked. The interval 287–375 is disordered; that stretch reads NGMSSSPSSS…RSRVAHLDRH (89 aa). Positions 290 to 341 are enriched in low complexity; it reads SSSPSSSSGVSSSSSSSVASSDTSDSTTSSGVVAVNVSAASSPSSSISANSA. N325 is a glycosylation site (N-linked (GlcNAc...) asparagine). A compositionally biased stretch (basic residues) spans 347–369; it reads KTCKRKKRSKIAGQKRHIHRSRV.

This sequence belongs to the polysaccharide monooxygenase AA9 family. It depends on Cu(2+) as a cofactor.

The protein localises to the secreted. Its subcellular location is the cell wall. It catalyses the reaction [(1-&gt;4)-beta-D-glucosyl]n+m + reduced acceptor + O2 = 4-dehydro-beta-D-glucosyl-[(1-&gt;4)-beta-D-glucosyl]n-1 + [(1-&gt;4)-beta-D-glucosyl]m + acceptor + H2O.. Functionally, lytic polysaccharide monooxygenase (LPMO) that depolymerizes polysaccharides via the oxidation of scissile alpha- or beta-(1-4)-glycosidic bonds, yielding C4 oxidation products. Catalysis by LPMOs requires the reduction of the active-site copper from Cu(II) to Cu(I) by a reducing agent and H(2)O(2) or O(2) as a cosubstrate. Required for the expression of stress response phenotypes, including thermotolerance, cell wall integrity, and efficient cell cycle progression. Promotes intrinsic fungal cell wall remodeling events required for efficient adaptation to the host environment. Required for virulence in a murine inhalational model of cryptococcal infection as well as in Galleria mellonella larvae. The sequence is that of AA9 family lytic polysaccharide monooxygenase CEL1 from Cryptococcus neoformans var. grubii serotype A (strain H99 / ATCC 208821 / CBS 10515 / FGSC 9487) (Filobasidiella neoformans var. grubii).